The sequence spans 456 residues: Phosphomannomutase (456 aa).

S98 functions as the Phosphoserine intermediate in the catalytic mechanism. Mg(2+)-binding residues include S98, D245, D247, and D249.

Belongs to the phosphohexose mutase family. Mg(2+) serves as cofactor.

The catalysed reaction is alpha-D-mannose 1-phosphate = D-mannose 6-phosphate. The protein operates within nucleotide-sugar biosynthesis; GDP-alpha-D-mannose biosynthesis; alpha-D-mannose 1-phosphate from D-fructose 6-phosphate: step 2/2. Its pathway is bacterial outer membrane biogenesis; LPS O-antigen biosynthesis. Its function is as follows. Involved in GDP-mannose biosynthesis which serves as the activated sugar nucleotide precursor for mannose residues in cell surface polysaccharides. This enzyme participates in synthesis of the LPS O antigen. This Salmonella montevideo protein is Phosphomannomutase (manB).